The chain runs to 344 residues: Probable aldo-keto reductase 1 (344 aa).

The active-site Proton donor is tyrosine 63. Substrate is bound at residue histidine 130. Position 209–219 (209–219) interacts with NADP(+); sequence SPLGLGFFAAG.

It belongs to the aldo/keto reductase family.

The chain is Probable aldo-keto reductase 1 from Arabidopsis thaliana (Mouse-ear cress).